Here is a 324-residue protein sequence, read N- to C-terminus: tRNA dimethylallyltransferase (324 aa).

17 to 24 (GPTASGKT) lines the ATP pocket. 19–24 (TASGKT) is a substrate binding site. Interaction with substrate tRNA regions lie at residues 42–45 (DSAL), 166–170 (QRIQR), 251–256 (RCVGYR), and 284–291 (KRQITWLR).

The protein belongs to the IPP transferase family. In terms of assembly, monomer. It depends on Mg(2+) as a cofactor.

The enzyme catalyses adenosine(37) in tRNA + dimethylallyl diphosphate = N(6)-dimethylallyladenosine(37) in tRNA + diphosphate. In terms of biological role, catalyzes the transfer of a dimethylallyl group onto the adenine at position 37 in tRNAs that read codons beginning with uridine, leading to the formation of N6-(dimethylallyl)adenosine (i(6)A). This chain is tRNA dimethylallyltransferase, found in Burkholderia orbicola (strain AU 1054).